We begin with the raw amino-acid sequence, 596 residues long: ATP-dependent RNA helicase dbp3 (596 aa).

Residues 1–17 (MPKRTLEDTELNPRDNY) are compositionally biased toward basic and acidic residues. Disordered stretches follow at residues 1–87 (MPKR…ESTS) and 115–139 (EEKV…QNGT). The segment covering 21–30 (SSKKSRKEKR) has biased composition (basic residues). A coiled-coil region spans residues 47-120 (IDIEVESKEA…KEGKEEKVDI (74 aa)). Over residues 123 to 139 (STDSATPISVAPQQNGT) the composition is skewed to polar residues. Positions 180–207 (IKFDYLPITDSAQRAPFKDFKAPTPIQA) match the Q motif motif. The 177-residue stretch at 210–386 (WPFLLAGRDV…STFMTSPVKI (177 aa)) folds into the Helicase ATP-binding domain. 223–230 (AETGSGKT) serves as a coordination point for ATP. A DEAD box motif is present at residues 332–335 (DEAD). A Helicase C-terminal domain is found at 417 to 566 (RLMQLLKQYQ…PVPDELLKFG (150 aa)).

Belongs to the DEAD box helicase family. DDX5/DBP2 subfamily.

Its subcellular location is the nucleus. It localises to the nucleolus. The enzyme catalyses ATP + H2O = ADP + phosphate + H(+). Its function is as follows. ATP-dependent RNA helicase required for 60S ribosomal subunit synthesis. Involved in efficient pre-rRNA processing, predominantly at site A3, which is necessary for the normal formation of 25S and 5.8S rRNAs. The sequence is that of ATP-dependent RNA helicase dbp3 (dbp3) from Sclerotinia sclerotiorum (strain ATCC 18683 / 1980 / Ss-1) (White mold).